We begin with the raw amino-acid sequence, 360 residues long: Phospho-N-acetylmuramoyl-pentapeptide-transferase (360 aa).

10 consecutive transmembrane segments (helical) span residues 26–46, 70–90, 97–117, 134–154, 168–188, 199–219, 236–256, 263–283, 288–308, and 338–358; these read AILG…AMIR, GTPT…TLLW, FVWV…IDDY, FFWQ…TAQA, VAIQ…VGAS, GLAI…AYLS, VGDL…FLWF, VFMG…LAVV, IVLV…IMQV, and VIVR…ATLK.

This sequence belongs to the glycosyltransferase 4 family. MraY subfamily. It depends on Mg(2+) as a cofactor.

The protein localises to the cell inner membrane. The catalysed reaction is UDP-N-acetyl-alpha-D-muramoyl-L-alanyl-gamma-D-glutamyl-meso-2,6-diaminopimeloyl-D-alanyl-D-alanine + di-trans,octa-cis-undecaprenyl phosphate = di-trans,octa-cis-undecaprenyl diphospho-N-acetyl-alpha-D-muramoyl-L-alanyl-D-glutamyl-meso-2,6-diaminopimeloyl-D-alanyl-D-alanine + UMP. The protein operates within cell wall biogenesis; peptidoglycan biosynthesis. Its function is as follows. Catalyzes the initial step of the lipid cycle reactions in the biosynthesis of the cell wall peptidoglycan: transfers peptidoglycan precursor phospho-MurNAc-pentapeptide from UDP-MurNAc-pentapeptide onto the lipid carrier undecaprenyl phosphate, yielding undecaprenyl-pyrophosphoryl-MurNAc-pentapeptide, known as lipid I. This chain is Phospho-N-acetylmuramoyl-pentapeptide-transferase, found in Thioalkalivibrio sulfidiphilus (strain HL-EbGR7).